The chain runs to 2671 residues: Stalled ribosome sensor GCN1 (2671 aa).

The residue at position 2 (Ala-2) is an N-acetylalanine. HEAT repeat units follow at residues 140 to 178, 257 to 293, 294 to 331, 385 to 423, 425 to 459, 460 to 503, 560 to 597, 599 to 636, 697 to 732, and 733 to 770; these read NKLV…ENPG, EFKD…LDLS, QYAM…QCSD, IVAE…EVPK, LTEW…GDTL, LQAL…SVAD, NKVQ…SLGG, KLAH…AGKA, DPEA…SLSV, and LSPD…QTPA. The residue at position 729 (Ser-729) is a Phosphoserine. Ser-786 is subject to Phosphoserine. The stretch at 804 to 863 forms a coiled coil; the sequence is QIIELELKEEIKKKKGIKEEVQLTSKQKEMLQAQLDREAQVRRRLQELDGELEAALGLLD. HEAT repeat units follow at residues 879-925, 979-1016, 1035-1072, 1078-1115, 1155-1192, 1210-1250, 1251-1289, 1290-1332, 1335-1372, 1374-1410, 1413-1451, 1455-1492, 1493-1530, 1534-1571, 1573-1609, 1611-1648, 1653-1690, 1692-1729, 1731-1769, 1773-1810, 1812-1848, 1921-1958, 1959-1996, 2001-2038, 2039-2076, 2078-2106, 2107-2146, 2147-2184, 2188-2225, 2259-2296, 2301-2338, 2339-2380, 2382-2417, 2422-2459, 2546-2583, and 2588-2625; these read VLVD…HVTL, SLVF…QAQL, LPRV…SSSG, FAEQ…VLPA, DLQP…RYQR, YRPP…YLDS, SQVK…THGK, ENVN…HLDK, PKVK…AIKE, AGGM…GLGI, LKQQ…MLGK, PYVV…NLSA, HGVK…CAPK, SCLP…VIRN, EILA…HFID, PSLA…LTDQ, PYLP…GMGE, CFED…GLGV, KLEK…TFGD, PYVG…MYAE, AIAL…HISG, EILP…KLGE, KILP…STSR, YFSE…TIGH, QALE…SRVV, PYLV…DALT, RHLG…VEDD, TGHR…RSKA, SHLR…KLDA, KGVT…LTSA, PSVV…AKVG, IALK…IHIK, DPLF…GAGA, VIRK…FLTE, QLPA…DPLP, and QAIK…MRQG. The interval 2260–2408 is RWDBD region; the sequence is GVTSILPVLR…GVRDTMLQAL (149 aa). Ser-2276 bears the Phosphoserine mark. An HEAT 47; degenerate repeat occupies 2627–2661; the sequence is EVFQSLSKILDVASLEVLNEVNRRSLKKLASQADS.

The protein belongs to the GCN1 family. In terms of assembly, interacts with EIF2AK4/GCN2; this interaction stimulates the EIF2AK4/GCN2 kinase activity and is impaired by IMPACT upon a variety of stress conditions, such as amino acid depletion, UV-C irradiation, proteasome inhibitor treatment and glucose deprivation. Interacts with IMPACT; this prevents the interaction of GCN1 with EIF2AK4/GCN2 and inhibits EIF2AK4/GCN2 kinase activity. Interacts with RNF14; interaction takes place following ribosome stalling and promotes recruitment of RNF14. In terms of tissue distribution, ubiquitously expressed. Expressed in skeletal muscules, ovary and testis.

It localises to the cytoplasm. Its function is as follows. Ribosome collision sensor that plays a key role in the RNF14-RNF25 translation quality control pathway, a pathway that takes place when a ribosome has stalled during translation, and which promotes ubiquitination and degradation of translation factors on stalled ribosomes. Directly binds to the ribosome and acts as a sentinel for colliding ribosomes: activated following ribosome stalling and promotes recruitment of RNF14, which directly ubiquitinates EEF1A1/eEF1A, leading to its degradation. In addition to EEF1A1/eEF1A, the RNF14-RNF25 translation quality control pathway mediates degradation of ETF1/eRF1 and ubiquitination of ribosomal protein. GCN1 also acts as a positive activator of the integrated stress response (ISR) by mediating activation of EIF2AK4/GCN2 in response to amino acid starvation. Interaction with EIF2AK4/GCN2 on translating ribosomes stimulates EIF2AK4/GCN2 kinase activity, leading to phosphorylation of eukaryotic translation initiation factor 2 (eIF-2-alpha/EIF2S1). EIF2S1/eIF-2-alpha phosphorylation converts EIF2S1/eIF-2-alpha into a global protein synthesis inhibitor, leading to a global attenuation of cap-dependent translation, and thus to a reduced overall utilization of amino acids, while concomitantly initiating the preferential translation of ISR-specific mRNAs, such as the transcriptional activator ATF4, and hence allowing ATF4-mediated reprogramming of amino acid biosynthetic gene expression to alleviate nutrient depletion. The chain is Stalled ribosome sensor GCN1 from Homo sapiens (Human).